The following is a 577-amino-acid chain: Beta-fructofuranosidase, insoluble isoenzyme 1 (577 aa).

The first 22 residues, methionine 1–alanine 22, serve as a signal peptide directing secretion. Aspartate 63 is a catalytic residue. Asparagine 158, asparagine 183, and asparagine 333 each carry an N-linked (GlcNAc...) asparagine glycan.

Belongs to the glycosyl hydrolase 32 family. As to expression, expressed in roots, leaves and flowers. Weakly expressed in seeds.

The protein localises to the secreted. It localises to the extracellular space. The protein resides in the apoplast. Its subcellular location is the cell wall. It carries out the reaction Hydrolysis of terminal non-reducing beta-D-fructofuranoside residues in beta-D-fructofuranosides.. May play a role in sucrose partitioning during seed development and in stress response. The polypeptide is Beta-fructofuranosidase, insoluble isoenzyme 1 (CIN1) (Oryza sativa subsp. japonica (Rice)).